A 965-amino-acid chain; its full sequence is Kinesin-like protein KIN-7K, chloroplastic (965 aa).

The disordered stretch occupies residues 1–69; the sequence is MASRQGSKSR…PQTAQRSKEN (69 aa). Over residues 19–28 the composition is skewed to low complexity; the sequence is STASSTTSSS. The span at 29–38 shows a compositional bias: polar residues; it reads KLYQETSIDG. A compositionally biased stretch (low complexity) spans 40 to 56; the sequence is SSPASSSAQSKQQFFSP. One can recognise a Kinesin motor domain in the interval 69-388; the sequence is NVTVTVRFRP…LKFAHRAKHI (320 aa). 149 to 156 contacts ATP; that stretch reads GVTSSGKT. Residues 389–483 are a coiled coil; sequence EIQAEQNKII…LTKLILVSTK (95 aa). Residues 551-561 show a composition bias toward basic residues; it reads LLNWLKPKKRD. Disordered stretches follow at residues 551 to 633 and 842 to 888; these read LLNW…KMSD and ATQK…ELRM. Residues 564–577 show a composition bias toward low complexity; that stretch reads SSASDQSSVVKSNS. Positions 606–623 are enriched in basic and acidic residues; sequence SEPREDREALEDSSHEME. Coiled coils occupy residues 628 to 703 and 738 to 846; these read SNKM…FVMT and NRII…TQKS. Residues 851–862 are compositionally biased toward low complexity; it reads RNKTGTTTNVRN. A compositionally biased stretch (basic and acidic residues) spans 864 to 888; the sequence is GRRESLAKRQEHDSPSMELKRELRM. Positions 896-931 form a coiled coil; sequence YEAALGEKEQREAELERILEETKQREAYLENELANM. The tract at residues 942 to 965 is disordered; that stretch reads QGADSEISDSISETRQTEQTEGSF. Residues 949-965 show a composition bias toward polar residues; that stretch reads SDSISETRQTEQTEGSF.

The protein belongs to the TRAFAC class myosin-kinesin ATPase superfamily. Kinesin family. KIN-7 subfamily.

The protein localises to the plastid. The protein resides in the chloroplast. This Arabidopsis thaliana (Mouse-ear cress) protein is Kinesin-like protein KIN-7K, chloroplastic.